Consider the following 329-residue polypeptide: Biotin synthase (329 aa).

Residues 46–275 form the Radical SAM core domain; the sequence is FFGRRLKLVR…LNPKAELRAS (230 aa). The [4Fe-4S] cluster site is built by Cys64, Cys68, and Cys71. Positions 108, 140, 200, and 273 each coordinate [2Fe-2S] cluster.

The protein belongs to the radical SAM superfamily. Biotin synthase family. In terms of assembly, homodimer. [4Fe-4S] cluster is required as a cofactor. Requires [2Fe-2S] cluster as cofactor.

It catalyses the reaction (4R,5S)-dethiobiotin + (sulfur carrier)-SH + 2 reduced [2Fe-2S]-[ferredoxin] + 2 S-adenosyl-L-methionine = (sulfur carrier)-H + biotin + 2 5'-deoxyadenosine + 2 L-methionine + 2 oxidized [2Fe-2S]-[ferredoxin]. It functions in the pathway cofactor biosynthesis; biotin biosynthesis; biotin from 7,8-diaminononanoate: step 2/2. In terms of biological role, catalyzes the conversion of dethiobiotin (DTB) to biotin by the insertion of a sulfur atom into dethiobiotin via a radical-based mechanism. This is Biotin synthase from Thermus thermophilus (strain ATCC BAA-163 / DSM 7039 / HB27).